We begin with the raw amino-acid sequence, 292 residues long: Elongation factor Ts (292 aa).

The tract at residues 79-82 (TDFV) is involved in Mg(2+) ion dislocation from EF-Tu.

The protein belongs to the EF-Ts family.

It localises to the cytoplasm. In terms of biological role, associates with the EF-Tu.GDP complex and induces the exchange of GDP to GTP. It remains bound to the aminoacyl-tRNA.EF-Tu.GTP complex up to the GTP hydrolysis stage on the ribosome. This is Elongation factor Ts from Xylella fastidiosa (strain Temecula1 / ATCC 700964).